The chain runs to 707 residues: Heat shock protein hsp88 (707 aa).

Residues 662-692 (EAEKAAKKAEEEARKAKEAAEKAAQEGAKDD) show a composition bias toward basic and acidic residues. The tract at residues 662–707 (EAEKAAKKAEEEARKAKEAAEKAAQEGAKDDEMTDADAPKPVVEEA) is disordered.

The protein belongs to the heat shock protein 70 family. As to quaternary structure, binds hsp30 independent of temperature or substrate. In terms of processing, the N-terminus is blocked.

Its subcellular location is the cytoplasm. This chain is Heat shock protein hsp88 (hsp88), found in Neurospora crassa (strain ATCC 24698 / 74-OR23-1A / CBS 708.71 / DSM 1257 / FGSC 987).